The primary structure comprises 229 residues: Heptaprenylglyceryl phosphate synthase (229 aa).

K12 serves as a coordination point for sn-glycerol 1-phosphate. Mg(2+)-binding residues include D14 and S40. Sn-glycerol 1-phosphate contacts are provided by residues 159–164 (YLEYSG), G189, and 209–210 (GN).

Belongs to the GGGP/HepGP synthase family. Group I subfamily. In terms of assembly, homodimer. The cofactor is Mg(2+).

It carries out the reaction sn-glycerol 1-phosphate + all-trans-heptaprenyl diphosphate = 3-heptaprenyl-sn-glycero-1-phosphate + diphosphate. Its pathway is membrane lipid metabolism; glycerophospholipid metabolism. Functionally, prenyltransferase that catalyzes in vivo the transfer of the heptaprenyl moiety of heptaprenyl pyrophosphate (HepPP; 35 carbon atoms) to the C3 hydroxyl of sn-glycerol-1-phosphate (G1P), producing heptaprenylglyceryl phosphate (HepGP). This reaction is an ether-bond-formation step in the biosynthesis of archaea-type G1P-based membrane lipids found in Bacillales. The polypeptide is Heptaprenylglyceryl phosphate synthase (Bacillus thuringiensis (strain Al Hakam)).